Here is a 334-residue protein sequence, read N- to C-terminus: Holliday junction branch migration complex subunit RuvB (334 aa).

Residues Met-1 to Tyr-180 are large ATPase domain (RuvB-L). ATP is bound by residues Leu-19, Arg-20, Gly-61, Lys-64, Thr-65, Thr-66, Glu-127–Phe-129, Arg-170, Tyr-180, and Arg-217. Position 65 (Thr-65) interacts with Mg(2+). The tract at residues Thr-181–Asn-251 is small ATPAse domain (RuvB-S). The segment at Ala-254–Phe-334 is head domain (RuvB-H). Residues Arg-309 and Arg-314 each coordinate DNA.

Belongs to the RuvB family. As to quaternary structure, homohexamer. Forms an RuvA(8)-RuvB(12)-Holliday junction (HJ) complex. HJ DNA is sandwiched between 2 RuvA tetramers; dsDNA enters through RuvA and exits via RuvB. An RuvB hexamer assembles on each DNA strand where it exits the tetramer. Each RuvB hexamer is contacted by two RuvA subunits (via domain III) on 2 adjacent RuvB subunits; this complex drives branch migration. In the full resolvosome a probable DNA-RuvA(4)-RuvB(12)-RuvC(2) complex forms which resolves the HJ.

It is found in the cytoplasm. It catalyses the reaction ATP + H2O = ADP + phosphate + H(+). Its function is as follows. The RuvA-RuvB-RuvC complex processes Holliday junction (HJ) DNA during genetic recombination and DNA repair, while the RuvA-RuvB complex plays an important role in the rescue of blocked DNA replication forks via replication fork reversal (RFR). RuvA specifically binds to HJ cruciform DNA, conferring on it an open structure. The RuvB hexamer acts as an ATP-dependent pump, pulling dsDNA into and through the RuvAB complex. RuvB forms 2 homohexamers on either side of HJ DNA bound by 1 or 2 RuvA tetramers; 4 subunits per hexamer contact DNA at a time. Coordinated motions by a converter formed by DNA-disengaged RuvB subunits stimulates ATP hydrolysis and nucleotide exchange. Immobilization of the converter enables RuvB to convert the ATP-contained energy into a lever motion, pulling 2 nucleotides of DNA out of the RuvA tetramer per ATP hydrolyzed, thus driving DNA branch migration. The RuvB motors rotate together with the DNA substrate, which together with the progressing nucleotide cycle form the mechanistic basis for DNA recombination by continuous HJ branch migration. Branch migration allows RuvC to scan DNA until it finds its consensus sequence, where it cleaves and resolves cruciform DNA. This chain is Holliday junction branch migration complex subunit RuvB, found in Thermotoga petrophila (strain ATCC BAA-488 / DSM 13995 / JCM 10881 / RKU-1).